Reading from the N-terminus, the 554-residue chain is uncharacterized protein (554 aa).

Positions 327 and 328 each coordinate Ca(2+).

The protein belongs to the sulfatase family. Ca(2+) serves as cofactor.

It localises to the cytoplasm. The protein resides in the nucleus. This is an uncharacterized protein from Schizosaccharomyces pombe (strain 972 / ATCC 24843) (Fission yeast).